The chain runs to 1031 residues: Beta-galactosidase (1031 aa).

2 residues coordinate substrate: asparagine 98 and aspartate 197. Aspartate 197 serves as a coordination point for Na(+). The Mg(2+) site is built by glutamate 412, histidine 414, and glutamate 457. Substrate contacts are provided by residues glutamate 457 and glutamate 533–histidine 536. The active-site Proton donor is glutamate 457. Glutamate 533 functions as the Nucleophile in the catalytic mechanism. Asparagine 593 lines the Mg(2+) pocket. Residues phenylalanine 597 and aspartate 600 each contribute to the Na(+) site. Positions 600 and 1005 each coordinate substrate.

The protein belongs to the glycosyl hydrolase 2 family. As to quaternary structure, homotetramer. Mg(2+) serves as cofactor. The cofactor is Na(+).

The enzyme catalyses Hydrolysis of terminal non-reducing beta-D-galactose residues in beta-D-galactosides.. The protein is Beta-galactosidase of Oenococcus oeni (strain ATCC BAA-331 / PSU-1).